A 558-amino-acid chain; its full sequence is Glucose-6-phosphate isomerase (558 aa).

A2 carries the post-translational modification N-acetylalanine. Residue K12 is modified to N6-acetyllysine. An N6-(2-hydroxyisobutyryl)lysine modification is found at K34. A Phosphoserine modification is found at S107. Residue T109 is modified to Phosphothreonine. Position 142 is an N6-acetyllysine (K142). 159 to 160 (GS) lines the D-glucose 6-phosphate pocket. The residue at position 185 (S185) is a Phosphoserine; by CK2. Residue 210 to 215 (SKTFTT) participates in D-glucose 6-phosphate binding. T250 carries the post-translational modification Phosphothreonine. Residues Q354, E358, and H389 each contribute to the D-glucose 6-phosphate site. E358 serves as the catalytic Proton donor. H389 is a catalytic residue. Residue K454 is modified to N6-acetyllysine; alternate. K454 is modified (N6-malonyllysine; alternate). K454 carries the post-translational modification N6-succinyllysine; alternate. At S455 the chain carries Phosphoserine. A D-glucose 6-phosphate-binding site is contributed by K519. K519 is a catalytic residue.

Belongs to the GPI family. In terms of assembly, homodimer in the catalytically active form, monomer in the secreted form. Post-translationally, phosphorylation at Ser-185 by CK2 has been shown to decrease enzymatic activity and may contribute to secretion by a non-classical secretory pathway. In terms of processing, ISGylated.

Its subcellular location is the cytoplasm. The protein resides in the secreted. The catalysed reaction is alpha-D-glucose 6-phosphate = beta-D-fructose 6-phosphate. The protein operates within carbohydrate degradation; glycolysis; D-glyceraldehyde 3-phosphate and glycerone phosphate from D-glucose: step 2/4. Functionally, in the cytoplasm, catalyzes the conversion of glucose-6-phosphate to fructose-6-phosphate, the second step in glycolysis, and the reverse reaction during gluconeogenesis. Besides it's role as a glycolytic enzyme, also acts as a secreted cytokine: acts as an angiogenic factor (AMF) that stimulates endothelial cell motility. Acts as a neurotrophic factor, neuroleukin, for spinal and sensory neurons. It is secreted by lectin-stimulated T-cells and induces immunoglobulin secretion. The protein is Glucose-6-phosphate isomerase of Sus scrofa (Pig).